Reading from the N-terminus, the 858-residue chain is Neurofilament medium polypeptide (858 aa).

At Ser2 the chain carries N-acetylserine. The tract at residues 2-99 is head; sequence SYTMEPLGNP…KLSRSNEKEQ (98 aa). Residues 22 to 57 form a disordered region; it reads ATYSRASASPSSGFRSQSWSRGSGSTVSSSYKRTNL. Positions 30–54 are enriched in low complexity; that stretch reads SPSSGFRSQSWSRGSGSTVSSSYKR. Thr47 carries O-linked (GlcNAc) threonine glycosylation. The IF rod domain occupies 96 to 407; sequence EKEQLQGLND…KLLEGEETRF (312 aa). The coil 1A stretch occupies residues 100–131; it reads LQGLNDRFAGYIEKVHYLEQQNKEIEAELAAL. The segment at 132-144 is linker 1; sequence RQKHAGRAQLGDA. The segment at 145-243 is coil 1B; that stretch reads YEQELRELRG…EEEVAELLAQ (99 aa). The tract at residues 244–260 is linker 12; sequence LQASHATVERKDYLKTD. The coil 2A stretch occupies residues 261-282; that stretch reads LTTALKEIRAQLECQSDHNMHQ. A linker 2 region spans residues 283 to 286; that stretch reads AEEW. A coil 2B region spans residues 287–407; it reads FKCRYAKLTE…KLLEGEETRF (121 aa). Residues 408–858 form a tail region; sequence SAFSGSITGP…SHAVVKEIKE (451 aa). Residue Thr427 is glycosylated (O-linked (GlcNAc) threonine). Residues 478–788 form a disordered region; sequence AAKAQEEEQE…VVTNGLDVSP (311 aa). Composition is skewed to acidic residues over residues 484 to 500 and 509 to 524; these read EEQE…EEEA and AAEE…EEEE. A compositionally biased stretch (basic and acidic residues) spans 525 to 541; that stretch reads AAKSDAAEEGGSKKEEI. Residues 542–555 are compositionally biased toward acidic residues; sequence EEKEEGEEAEEEEA. Residues 556 to 572 are compositionally biased toward basic and acidic residues; sequence EAKGKAEEAGAKVEKVK. Residues 576–586 are compositionally biased toward pro residues; it reads AKSPPKSPPKS. The segment covering 590 to 601 has biased composition (low complexity); sequence EQAKAVQKAAAE. Positions 602-623 are enriched in basic and acidic residues; it reads VGKDQKAEKAAEKAAKEEKAAS. Over residues 624 to 637 the composition is skewed to low complexity; it reads PEKPATPKVTSPEK. Composition is skewed to basic and acidic residues over residues 651-664 and 675-727; these read ITPE…KPTT and ASPE…KAVV. The segment covering 728–743 has biased composition (low complexity); it reads EESITVTKVTKVTAEV. The segment covering 744–771 has biased composition (basic and acidic residues); the sequence is EVSKEARKEDIAVNGEVEEKKDEAKEKE.

It belongs to the intermediate filament family. Post-translationally, there are a number of repeats of the tripeptide K-S-P, NFM is phosphorylated on a number of the serines in this motif. It is thought that phosphorylation of NFM results in the formation of interfilament cross bridges that are important in the maintenance of axonal caliber. Phosphorylation seems to play a major role in the functioning of the larger neurofilament polypeptides (NF-M and NF-H), the levels of phosphorylation being altered developmentally and coincident with a change in the neurofilament function.

Its subcellular location is the cytoplasm. The protein resides in the cytoskeleton. It localises to the cell projection. The protein localises to the axon. In terms of biological role, neurofilaments usually contain three intermediate filament proteins: NEFL, NEFM, and NEFH which are involved in the maintenance of neuronal caliber. May additionally cooperate with other neuronal intermediate filament proteins to form neuronal filamentous networks. This is Neurofilament medium polypeptide (NEFM) from Gallus gallus (Chicken).